The following is a 754-amino-acid chain: 5-methyltetrahydropteroyltriglutamate--homocysteine methyltransferase (754 aa).

5-methyltetrahydropteroyltri-L-glutamate contacts are provided by residues 16-19 (RELK) and Lys114. Residues 430 to 432 (IGS) and Glu483 each bind L-homocysteine. Residues 430-432 (IGS) and Glu483 each bind L-methionine. 5-methyltetrahydropteroyltri-L-glutamate-binding positions include 514–515 (RC) and Trp560. Asp598 provides a ligand contact to L-homocysteine. Position 598 (Asp598) interacts with L-methionine. Glu604 contributes to the 5-methyltetrahydropteroyltri-L-glutamate binding site. The Zn(2+) site is built by His640, Cys642, and Glu664. His693 acts as the Proton donor in catalysis. Residue Cys725 participates in Zn(2+) binding.

It belongs to the vitamin-B12 independent methionine synthase family. It depends on Zn(2+) as a cofactor.

The catalysed reaction is 5-methyltetrahydropteroyltri-L-glutamate + L-homocysteine = tetrahydropteroyltri-L-glutamate + L-methionine. The protein operates within amino-acid biosynthesis; L-methionine biosynthesis via de novo pathway; L-methionine from L-homocysteine (MetE route): step 1/1. Its function is as follows. Catalyzes the transfer of a methyl group from 5-methyltetrahydrofolate to homocysteine resulting in methionine formation. In Aeromonas salmonicida (strain A449), this protein is 5-methyltetrahydropteroyltriglutamate--homocysteine methyltransferase.